The primary structure comprises 983 residues: Kinesin-like protein KIN-14I (983 aa).

A Calponin-homology (CH) domain is found at 44–166 (ASRRYEAANW…CVLAIKSYDE (123 aa)). Composition is skewed to polar residues over residues 203-214 (SLSRTSSINNEK) and 278-287 (ESTSSQNNRS). 2 disordered regions span residues 203–227 (SLSRTSSINNEKAPSENDSNKLSSP) and 276–295 (PRESTSSQNNRSFLKPLGER). A Kinesin motor domain is found at 399–724 (SIRVYCRVRP…LKFAERVATV (326 aa)). Residue 481 to 488 (GQTGSGKT) coordinates ATP. Residues 731–758 (VNNDTSDVKELKEQIATLKAALARKEAE) are a coiled coil. Disordered stretches follow at residues 802-824 (TVNSPPWPPVASPGQAYREDDRS) and 921-983 (TRSN…NARH). Over residues 939-951 (SPQSRNNSNNTVS) the composition is skewed to polar residues.

This sequence belongs to the TRAFAC class myosin-kinesin ATPase superfamily. Kinesin family. KIN-14 subfamily.

This chain is Kinesin-like protein KIN-14I, found in Arabidopsis thaliana (Mouse-ear cress).